A 100-amino-acid chain; its full sequence is Urease subunit gamma (100 aa).

This sequence belongs to the urease gamma subunit family. Heterotrimer of UreA (gamma), UreB (beta) and UreC (alpha) subunits. Three heterotrimers associate to form the active enzyme.

The protein localises to the cytoplasm. It catalyses the reaction urea + 2 H2O + H(+) = hydrogencarbonate + 2 NH4(+). It functions in the pathway nitrogen metabolism; urea degradation; CO(2) and NH(3) from urea (urease route): step 1/1. The sequence is that of Urease subunit gamma from Prochlorococcus marinus (strain MIT 9303).